A 160-amino-acid chain; its full sequence is Phosphopantetheine adenylyltransferase (160 aa).

The protein belongs to the eukaryotic CoaD family.

Its subcellular location is the cytoplasm. It catalyses the reaction (R)-4'-phosphopantetheine + ATP + H(+) = 3'-dephospho-CoA + diphosphate. The protein operates within cofactor biosynthesis; coenzyme A biosynthesis. Reversibly transfers an adenylyl group from ATP to 4'-phosphopantetheine, yielding dephospho-CoA (dPCoA) and pyrophosphate. This is Phosphopantetheine adenylyltransferase from Pyrococcus furiosus (strain ATCC 43587 / DSM 3638 / JCM 8422 / Vc1).